Reading from the N-terminus, the 425-residue chain is Histidine--tRNA ligase (425 aa).

This sequence belongs to the class-II aminoacyl-tRNA synthetase family. In terms of assembly, homodimer.

The protein resides in the cytoplasm. It carries out the reaction tRNA(His) + L-histidine + ATP = L-histidyl-tRNA(His) + AMP + diphosphate + H(+). The polypeptide is Histidine--tRNA ligase (Shewanella oneidensis (strain ATCC 700550 / JCM 31522 / CIP 106686 / LMG 19005 / NCIMB 14063 / MR-1)).